The primary structure comprises 149 residues: Nucleoside diphosphate kinase (149 aa).

Positions 9, 57, 85, 91, 102, and 112 each coordinate ATP. H115 functions as the Pros-phosphohistidine intermediate in the catalytic mechanism.

The protein belongs to the NDK family. Homotetramer. It depends on Mg(2+) as a cofactor.

It localises to the cytoplasm. The enzyme catalyses a 2'-deoxyribonucleoside 5'-diphosphate + ATP = a 2'-deoxyribonucleoside 5'-triphosphate + ADP. It carries out the reaction a ribonucleoside 5'-diphosphate + ATP = a ribonucleoside 5'-triphosphate + ADP. In terms of biological role, major role in the synthesis of nucleoside triphosphates other than ATP. The ATP gamma phosphate is transferred to the NDP beta phosphate via a ping-pong mechanism, using a phosphorylated active-site intermediate. This Acaryochloris marina (strain MBIC 11017) protein is Nucleoside diphosphate kinase.